The primary structure comprises 49 residues: Large ribosomal subunit protein bL32 (49 aa).

This sequence belongs to the bacterial ribosomal protein bL32 family.

The protein is Large ribosomal subunit protein bL32 of Nitratiruptor sp. (strain SB155-2).